The sequence spans 453 residues: Cobyrinate a,c-diamide synthase (453 aa).

The GATase cobBQ-type domain occupies R250 to D440. Residue C332 is the Nucleophile of the active site.

The protein belongs to the CobB/CbiA family. The cofactor is Mg(2+).

The enzyme catalyses cob(II)yrinate + 2 L-glutamine + 2 ATP + 2 H2O = cob(II)yrinate a,c diamide + 2 L-glutamate + 2 ADP + 2 phosphate + 2 H(+). It catalyses the reaction Ni-sirohydrochlorin + 2 L-glutamine + 2 ATP + 2 H2O = Ni-sirohydrochlorin a,c-diamide + 2 L-glutamate + 2 ADP + 2 phosphate + 2 H(+). It participates in cofactor biosynthesis; adenosylcobalamin biosynthesis; cob(II)yrinate a,c-diamide from sirohydrochlorin (anaerobic route): step 10/10. Functionally, catalyzes the ATP-dependent amidation of the two carboxylate groups at positions a and c of cobyrinate, using either L-glutamine or ammonia as the nitrogen source. Involved in the biosynthesis of the unique nickel-containing tetrapyrrole coenzyme F430, the prosthetic group of methyl-coenzyme M reductase (MCR), which plays a key role in methanogenesis and anaerobic methane oxidation. Catalyzes the ATP-dependent amidation of the two carboxylate groups at positions a and c of Ni-sirohydrochlorin, using L-glutamine or ammonia as the nitrogen source. In Methanosphaera stadtmanae (strain ATCC 43021 / DSM 3091 / JCM 11832 / MCB-3), this protein is Cobyrinate a,c-diamide synthase.